The chain runs to 897 residues: Macoilin (897 aa).

The next 4 membrane-spanning stretches (helical) occupy residues I113–I133, Q157–I177, P181–P201, and L204–M224. Polar residues-rich tracts occupy residues I291 to K304 and G329 to P338. The interval I291–Q375 is disordered. Residues D351–D361 are compositionally biased toward acidic residues. Residues G379–F399 form a helical membrane-spanning segment. Residues T403–Q413 are compositionally biased toward polar residues. Disordered stretches follow at residues T403 to D535 and N724 to P770. The span at I414 to D424 shows a compositional bias: acidic residues. Residues T432–R451 show a composition bias toward polar residues. Composition is skewed to low complexity over residues S452–G467 and S475–H490. The stretch at D503–S726 forms a coiled coil. Positions T510 to D535 are enriched in basic and acidic residues. Polar residues predominate over residues E734–Q761.

Strong expression in many neurons, very weak expression is also detected in others tissues.

Its subcellular location is the rough endoplasmic reticulum membrane. It is found in the nucleus membrane. Plays a role in the regulation of neuronal activity. In AWA and AWC neurons, plays a role in regulating olfactory adaptation by controlling the forgetting sensory responses to odorants such as diacetyl and isoamyl alcohol. May play a role in regulating daf-7 expression in ASI neurons in response to bacterial small RNAs. In ASI neurons, promotes dauer formation in response to pheromones such as the ascarosides ascr#2 and ascr#3. This Caenorhabditis elegans protein is Macoilin.